The chain runs to 245 residues: 1-(5-phosphoribosyl)-5-[(5-phosphoribosylamino)methylideneamino] imidazole-4-carboxamide isomerase (245 aa).

Residue D7 is the Proton acceptor of the active site. D129 acts as the Proton donor in catalysis.

Belongs to the HisA/HisF family.

It is found in the cytoplasm. The enzyme catalyses 1-(5-phospho-beta-D-ribosyl)-5-[(5-phospho-beta-D-ribosylamino)methylideneamino]imidazole-4-carboxamide = 5-[(5-phospho-1-deoxy-D-ribulos-1-ylimino)methylamino]-1-(5-phospho-beta-D-ribosyl)imidazole-4-carboxamide. It participates in amino-acid biosynthesis; L-histidine biosynthesis; L-histidine from 5-phospho-alpha-D-ribose 1-diphosphate: step 4/9. The polypeptide is 1-(5-phosphoribosyl)-5-[(5-phosphoribosylamino)methylideneamino] imidazole-4-carboxamide isomerase (Shewanella sp. (strain ANA-3)).